The sequence spans 847 residues: MKKTPVFLESLVTNMLRLRAICPFSWRVFQFRPISCEPLIIQMNKCTDEEQMFGFIERNKAILSEKQVGCAFDMLWKLQKQKTSLLKNAEYVRDHPQFLTLHNLATNKFKLMNDDTLVNVLYVTQQFAGEAHDPLVEALVTEAWRRLERFDIKLLSEFSSCLADQHLYFSPLMGKIADIVHRNLETTQDLSSLSVLMVNISSLISRHFQQQLVNKTELLFDTIDSSEVNVAKSIAKFLRNVRYRYQPLLERCNNVFLSNVDHLDLDSISKILSVYKFLQFNSFEFIIMAKKKLTEMIPLCNHPASFVKLFVALGPIAGPEEKKQLKSTMLLMSEDLTGEQALAVLGAMGDMESRNSCLIKRVTSVLHKHLDGYKPLELLKITQELTFLHFQRKEFFAKLRELLLSYLKNSFIPTEVSVLVRAISLLPSPHLDEVGISRIEAVLPQCDLNNLSSFATSVLRWIQHDHMYLDNMTAKQLKLLQKLDHYGRQRLQHSNSLDLLRKELKSLKGNTFPESLLEEMIATLQHFMDDINYINVGEIASFISSTDYLSTLLLDRIASVAVQQIEKIHPFTIPAIIRPFSVLNYDPPQRDEFLGTCVQHLNSYLGILDPFILVFLGFSLATLEYFPEDLLKAIFNIKFLARLDSQLEILSPSRSARVQFHLMELNRSVCLECPEFQIPWFHDRFCQQYNKGIGGMDGTQQQIFKMLAEVLGGINCVKASVLTPYYHKVDFECILDKRKKPLPYGSHNIALGQLPEMPWESNIEIVGSRLPPGAERIALEFLDSKALCRNIPHMKGKSAMKKRHLEILGYRVIQISQFEWNSMALSTKDARMDYLRECIFGEVKSCL.

Lys360 bears the N6-acetyllysine mark. Positions Ile777–Glu837 constitute an RAP domain.

Belongs to the FAST kinase family. Expression detected in spleen, thymus, testis, ovary, colon, heart, smooth muscle, kidney, brain, lung, liver and white adipose tissue with highest expression in heart.

Its subcellular location is the mitochondrion. In terms of biological role, involved in the down-regulation of mitochondrial MT-ND3 mRNA levels which leads to decreased respiratory complex I abundance and activity. The chain is FAST kinase domain-containing protein 1, mitochondrial (FASTKD1) from Homo sapiens (Human).